Reading from the N-terminus, the 59-residue chain is Conotoxin Ts-03 (59 aa).

An N-terminal signal peptide occupies residues 1-19 (MRCLPVFIILLLLIPSAAS). Residues 20 to 47 (VAQPKTKDDVALASFYDNAKRTLQRHWA) constitute a propeptide that is removed on maturation.

The protein belongs to the conotoxin T superfamily. Contains 2 disulfide bonds that can be either 'C1-C3, C2-C4' or 'C1-C4, C2-C3', since these disulfide connectivities have been observed for conotoxins with cysteine framework V (for examples, see AC P0DQQ7 and AC P81755). As to expression, expressed by the venom duct.

It is found in the secreted. In Conus tessulatus (Tessellate cone), this protein is Conotoxin Ts-03.